Reading from the N-terminus, the 208-residue chain is Uracil phosphoribosyltransferase (208 aa).

5-phospho-alpha-D-ribose 1-diphosphate-binding positions include arginine 78, arginine 103, and 130 to 138 (DPMLATGGS). Uracil is bound by residues isoleucine 193 and 198–200 (GDA). Residue aspartate 199 participates in 5-phospho-alpha-D-ribose 1-diphosphate binding.

The protein belongs to the UPRTase family. It depends on Mg(2+) as a cofactor.

It catalyses the reaction UMP + diphosphate = 5-phospho-alpha-D-ribose 1-diphosphate + uracil. It functions in the pathway pyrimidine metabolism; UMP biosynthesis via salvage pathway; UMP from uracil: step 1/1. With respect to regulation, allosterically activated by GTP. Catalyzes the conversion of uracil and 5-phospho-alpha-D-ribose 1-diphosphate (PRPP) to UMP and diphosphate. The sequence is that of Uracil phosphoribosyltransferase from Mannheimia succiniciproducens (strain KCTC 0769BP / MBEL55E).